Consider the following 406-residue polypeptide: Accessory Sec system protein translocase subunit SecY2 (406 aa).

A run of 10 helical transmembrane segments spans residues 14–34, 63–83, 108–128, 131–151, 156–176, 190–210, 246–266, 285–305, 344–364, and 368–388; these read SWTV…LPFI, FSLF…WQMF, FAIA…EVGI, GLAI…LVWL, SFFG…ANLP, LPII…AVIV, FMYA…IQIL, PIWL…FAFV, AVIG…IVLI, and YLQL…VYNV.

The protein belongs to the SecY/SEC61-alpha family. SecY2 subfamily. Component of the accessory SecA2/SecY2 protein translocase complex required to export cell wall proteins. May form heterotrimers with SecE and SecG subunits.

It is found in the cell membrane. Part of the accessory SecA2/SecY2 system specifically required for export of possible cell wall proteins. The central subunit of a protein translocation channel. The chain is Accessory Sec system protein translocase subunit SecY2 from Streptococcus salivarius (strain CCHSS3).